The chain runs to 94 residues: MGKGGNYVTVAASEVDELRRKNGEMEKAVEEMKKEMLQLWRRTQVAEEAEERLCSQLAELEAESLDQARDYHSRIIFLMNELSRLSSDSASASP.

The stretch at 15–63 (VDELRRKNGEMEKAVEEMKKEMLQLWRRTQVAEEAEERLCSQLAELEAE) forms a coiled coil.

Its function is as follows. May be involved in defense responses monitoring. Probably implicated into osmotic stress signaling. In Arabidopsis thaliana (Mouse-ear cress), this protein is Protein RESPONSE TO LOW SULFUR 2.